The following is a 447-amino-acid chain: Phosphoglucosamine mutase (447 aa).

Residue serine 105 is the Phosphoserine intermediate of the active site. Mg(2+) is bound by residues serine 105, aspartate 244, aspartate 246, and aspartate 248. Serine 105 carries the post-translational modification Phosphoserine.

The protein belongs to the phosphohexose mutase family. Requires Mg(2+) as cofactor. Activated by phosphorylation.

It carries out the reaction alpha-D-glucosamine 1-phosphate = D-glucosamine 6-phosphate. In terms of biological role, catalyzes the conversion of glucosamine-6-phosphate to glucosamine-1-phosphate. This is Phosphoglucosamine mutase from Polynucleobacter asymbioticus (strain DSM 18221 / CIP 109841 / QLW-P1DMWA-1) (Polynucleobacter necessarius subsp. asymbioticus).